A 249-amino-acid chain; its full sequence is MADISNKKVSELTSEEIIQLIANSKKKTIVRVYVSGNLKALDIRDFEGYGKEFEFVGGQDFGVLFGNYEYIKEILRNNSITSFKVEYIAHNSAIPLSDISKFNARIEPGAIIREYVEIGNNAVIMMGAVINLGAIIGEGTMIDMNTVIGARARIGKYCHIGAGSVIAGVVEPPSAQPVIIEDNVVIGANAVILEGVRVGEHSVVAAGAVVVEDVPPYTVVAGVPAKVIKKVDEKTISKTQLIEELRKLR.

It belongs to the transferase hexapeptide repeat family. DapH subfamily.

It catalyses the reaction (S)-2,3,4,5-tetrahydrodipicolinate + acetyl-CoA + H2O = L-2-acetamido-6-oxoheptanedioate + CoA. Its pathway is amino-acid biosynthesis; L-lysine biosynthesis via DAP pathway; LL-2,6-diaminopimelate from (S)-tetrahydrodipicolinate (acetylase route): step 1/3. Its function is as follows. Catalyzes the transfer of an acetyl group from acetyl-CoA to tetrahydrodipicolinate. The protein is 2,3,4,5-tetrahydropyridine-2,6-dicarboxylate N-acetyltransferase of Fervidobacterium nodosum (strain ATCC 35602 / DSM 5306 / Rt17-B1).